A 126-amino-acid chain; its full sequence is Aspartate 1-decarboxylase (126 aa).

Residue Ser-25 is the Schiff-base intermediate with substrate; via pyruvic acid of the active site. Ser-25 is modified (pyruvic acid (Ser)). Thr-57 serves as a coordination point for substrate. Residue Tyr-58 is the Proton donor of the active site. Gly-73–Ala-75 provides a ligand contact to substrate.

It belongs to the PanD family. In terms of assembly, heterooctamer of four alpha and four beta subunits. Pyruvate is required as a cofactor. In terms of processing, is synthesized initially as an inactive proenzyme, which is activated by self-cleavage at a specific serine bond to produce a beta-subunit with a hydroxyl group at its C-terminus and an alpha-subunit with a pyruvoyl group at its N-terminus.

Its subcellular location is the cytoplasm. It carries out the reaction L-aspartate + H(+) = beta-alanine + CO2. It functions in the pathway cofactor biosynthesis; (R)-pantothenate biosynthesis; beta-alanine from L-aspartate: step 1/1. Its function is as follows. Catalyzes the pyruvoyl-dependent decarboxylation of aspartate to produce beta-alanine. This is Aspartate 1-decarboxylase from Acinetobacter baumannii (strain ACICU).